A 484-amino-acid polypeptide reads, in one-letter code: tRNA sulfurtransferase (484 aa).

The region spanning 61–165 (ILLVELLGRI…NDKMMLIKAR (105 aa)) is the THUMP domain. ATP-binding positions include 183–184 (LI), lysine 265, glycine 287, and glutamine 296. Cysteine 344 and cysteine 456 form a disulfide bridge. Positions 404–484 (LSANDVILDI…DNVKVLNKIS (81 aa)) constitute a Rhodanese domain. Residue cysteine 456 is the Cysteine persulfide intermediate of the active site.

Belongs to the ThiI family.

The protein localises to the cytoplasm. It catalyses the reaction [ThiI sulfur-carrier protein]-S-sulfanyl-L-cysteine + a uridine in tRNA + 2 reduced [2Fe-2S]-[ferredoxin] + ATP + H(+) = [ThiI sulfur-carrier protein]-L-cysteine + a 4-thiouridine in tRNA + 2 oxidized [2Fe-2S]-[ferredoxin] + AMP + diphosphate. The enzyme catalyses [ThiS sulfur-carrier protein]-C-terminal Gly-Gly-AMP + S-sulfanyl-L-cysteinyl-[cysteine desulfurase] + AH2 = [ThiS sulfur-carrier protein]-C-terminal-Gly-aminoethanethioate + L-cysteinyl-[cysteine desulfurase] + A + AMP + 2 H(+). The protein operates within cofactor biosynthesis; thiamine diphosphate biosynthesis. In terms of biological role, catalyzes the ATP-dependent transfer of a sulfur to tRNA to produce 4-thiouridine in position 8 of tRNAs, which functions as a near-UV photosensor. Also catalyzes the transfer of sulfur to the sulfur carrier protein ThiS, forming ThiS-thiocarboxylate. This is a step in the synthesis of thiazole, in the thiamine biosynthesis pathway. The sulfur is donated as persulfide by IscS. The polypeptide is tRNA sulfurtransferase (Histophilus somni (strain 129Pt) (Haemophilus somnus)).